Consider the following 139-residue polypeptide: D-ribose pyranase (139 aa).

His20 (proton donor) is an active-site residue. Residues Asp28, His106, and 128-130 (YAN) contribute to the substrate site.

This sequence belongs to the RbsD / FucU family. RbsD subfamily. In terms of assembly, homodecamer.

The protein localises to the cytoplasm. It carries out the reaction beta-D-ribopyranose = beta-D-ribofuranose. The protein operates within carbohydrate metabolism; D-ribose degradation; D-ribose 5-phosphate from beta-D-ribopyranose: step 1/2. Its function is as follows. Catalyzes the interconversion of beta-pyran and beta-furan forms of D-ribose. The polypeptide is D-ribose pyranase (Actinobacillus pleuropneumoniae serotype 7 (strain AP76)).